The primary structure comprises 220 residues: ATP synthase subunit 5, mitochondrial (220 aa).

Belongs to the ATPase delta chain family. F-type ATPases have 2 components, CF(1) - the catalytic core - and CF(0) - the membrane proton channel. CF(1) has five subunits: alpha(3), beta(3), gamma(1), delta(1), epsilon(1). CF(0) has three main subunits: a, b and c.

The protein resides in the mitochondrion. It is found in the mitochondrion inner membrane. In terms of biological role, mitochondrial membrane ATP synthase (F(1)F(0) ATP synthase or Complex V) produces ATP from ADP in the presence of a proton gradient across the membrane which is generated by electron transport complexes of the respiratory chain. F-type ATPases consist of two structural domains, F(1) - containing the extramembraneous catalytic core and F(0) - containing the membrane proton channel, linked together by a central stalk and a peripheral stalk. During catalysis, ATP synthesis in the catalytic domain of F(1) is coupled via a rotary mechanism of the central stalk subunits to proton translocation. Part of the complex F(0) domain and the peripheric stalk, which acts as a stator to hold the catalytic alpha(3)beta(3) subcomplex and subunit a/ATP6 static relative to the rotary elements. This chain is ATP synthase subunit 5, mitochondrial (atp-5), found in Neurospora crassa (strain ATCC 24698 / 74-OR23-1A / CBS 708.71 / DSM 1257 / FGSC 987).